Here is a 72-residue protein sequence, read N- to C-terminus: Large ribosomal subunit protein uL29 (72 aa).

The protein belongs to the universal ribosomal protein uL29 family.

The sequence is that of Large ribosomal subunit protein uL29 from Microcystis aeruginosa (strain NIES-843 / IAM M-2473).